The following is a 109-amino-acid chain: MSITDVLSADDIAAALQECQDPDTFEPQKFFQTSGLSKMSASQVKDVFRFIDNDQSGYLDEEELKFFLQKFESGARELTESETKSLMAAADNDGDGKIGAEEFQEMVHS.

2 consecutive EF-hand domains span residues 39 to 74 (MSASQVKDVFRFIDNDQSGYLDEEELKFFLQKFESG) and 78 to 109 (LTESETKSLMAAADNDGDGKIGAEEFQEMVHS). Ca(2+) contacts are provided by aspartate 52, aspartate 54, serine 56, tyrosine 58, glutamate 63, aspartate 91, aspartate 93, aspartate 95, lysine 97, and glutamate 102.

This sequence belongs to the parvalbumin family.

The polypeptide is Oncomodulin-2 (OCM2) (Homo sapiens (Human)).